The primary structure comprises 116 residues: Heme-degrading monooxygenase (116 aa).

The 91-residue stretch at 2–92 folds into the ABM domain; that stretch reads VIVTNTSKIT…EYILENKISF (91 aa). N6 is a binding site for Fe cation. H76 is a binding site for heme.

The protein belongs to the antibiotic biosynthesis monooxygenase family. Heme-degrading monooxygenase IsdG subfamily. Homodimer.

It is found in the cytoplasm. The catalysed reaction is heme b + 3 reduced [NADPH--hemoprotein reductase] + 3 O2 = biliverdin IXalpha + CO + Fe(2+) + 3 oxidized [NADPH--hemoprotein reductase] + 3 H2O + H(+). Allows bacterial pathogens to use the host heme as an iron source. Catalyzes the oxidative degradation of the heme macrocyclic porphyrin ring to the biliverdin in the presence of a suitable electron donor such as ascorbate or NADPH--cytochrome P450 reductase, with subsequent release of free iron. The sequence is that of Heme-degrading monooxygenase from Halalkalibacterium halodurans (strain ATCC BAA-125 / DSM 18197 / FERM 7344 / JCM 9153 / C-125) (Bacillus halodurans).